The following is a 347-amino-acid chain: Probable dual-specificity RNA methyltransferase RlmN (347 aa).

E93 functions as the Proton acceptor in the catalytic mechanism. Positions 100 to 323 (KAKRKTACVS…KKAGLNISTR (224 aa)) constitute a Radical SAM core domain. C107 and C334 form a disulfide bridge. [4Fe-4S] cluster is bound by residues C114, C118, and C121. Residues 160–161 (GE), S192, 215–217 (SLT), and N291 contribute to the S-adenosyl-L-methionine site. C334 serves as the catalytic S-methylcysteine intermediate.

It belongs to the radical SAM superfamily. RlmN family. It depends on [4Fe-4S] cluster as a cofactor.

The protein resides in the cytoplasm. The enzyme catalyses adenosine(2503) in 23S rRNA + 2 reduced [2Fe-2S]-[ferredoxin] + 2 S-adenosyl-L-methionine = 2-methyladenosine(2503) in 23S rRNA + 5'-deoxyadenosine + L-methionine + 2 oxidized [2Fe-2S]-[ferredoxin] + S-adenosyl-L-homocysteine. It carries out the reaction adenosine(37) in tRNA + 2 reduced [2Fe-2S]-[ferredoxin] + 2 S-adenosyl-L-methionine = 2-methyladenosine(37) in tRNA + 5'-deoxyadenosine + L-methionine + 2 oxidized [2Fe-2S]-[ferredoxin] + S-adenosyl-L-homocysteine. In terms of biological role, specifically methylates position 2 of adenine 2503 in 23S rRNA and position 2 of adenine 37 in tRNAs. The chain is Probable dual-specificity RNA methyltransferase RlmN from Treponema denticola (strain ATCC 35405 / DSM 14222 / CIP 103919 / JCM 8153 / KCTC 15104).